We begin with the raw amino-acid sequence, 1152 residues long: Syntaxin-binding protein 5 (1152 aa).

Positions 14 to 35 (TAGSSSASQQQQQQQHPPGNRE) are disordered. Low complexity predominate over residues 17-28 (SSSASQQQQQQQ). 10 WD repeats span residues 62 to 95 (SALA…CYCQ), 102 to 141 (VIQL…SLKF), 146 to 182 (VTFC…GYVI), 201 to 235 (HISD…DYRY), 241 to 273 (IHSV…PAKP), 295 to 337 (PILK…KSTA), 345 to 379 (IVDF…LIDL), 401 to 478 (TCCE…YKLK), 506 to 620 (QIIS…ELVI), and 634 to 696 (TSLA…SGAG). 2 disordered regions span residues 555 to 596 (VDTP…GLRD) and 675 to 731 (SNDP…QKVN). Ser-693 is subject to Phosphoserine. Positions 713-722 (SPTSGSSSPH) are enriched in low complexity. Ser-724 and Ser-760 each carry phosphoserine. Thr-763 is subject to Phosphothreonine. At Ser-783 the chain carries Phosphoserine. Thr-785 is modified (phosphothreonine). At Ser-786 the chain carries Phosphoserine. 4 WD repeats span residues 795 to 852 (ISAL…SGTI), 861 to 935 (RMAF…QSCA), 940 to 984 (ITET…LDVY), and 998 to 1021 (CFAN…TYSQ). Basic and acidic residues predominate over residues 883–893 (NVAEEKDEKEK). Residues 883-907 (NVAEEKDEKEKLKKRRPVSVSPSSS) are disordered. 2 positions are modified to phosphoserine: Ser-901 and Ser-903. Thr-1040 is modified (phosphothreonine). Phosphoserine is present on residues Ser-1059 and Ser-1132. Residues 1087-1147 (GIEGVKGAAS…HEMMLKYKDK (61 aa)) form the v-SNARE coiled-coil homology domain.

The protein belongs to the WD repeat L(2)GL family. As to quaternary structure, part of a complex that contains STX1, STXBP5, SNAP25 and SYT1. Interacts with STX1A and STX4A via its v-SNARE homology domain. Part of a complex that contains STXBP5, STX4A and SNAP23. In terms of tissue distribution, detected in heart, spleen, lung, skeletal muscle, liver and kidney (at protein level). Detected in brain, particularly in the olfactory bulb and in hippocampus. Detected in the tenia tecta and in the piriform layer of the brain cortex.

The protein localises to the cytoplasm. The protein resides in the cell membrane. Its subcellular location is the membrane. Functionally, plays a regulatory role in calcium-dependent exocytosis and neurotransmitter release. Inhibits membrane fusion between transport vesicles and the plasma membrane. May modulate the assembly of trans-SNARE complexes between transport vesicles and the plasma membrane. Competes with STXBP1 for STX1 binding. Inhibits translocation of GLUT4 from intracellular vesicles to the plasma membrane. The sequence is that of Syntaxin-binding protein 5 (Stxbp5) from Mus musculus (Mouse).